The chain runs to 189 residues: Ribonuclease M5 (189 aa).

In terms of domain architecture, Toprim spans 8–91 (KEIIVVEGKD…AFLPKEEALA (84 aa)). The Mg(2+) site is built by glutamate 14, aspartate 60, and aspartate 62.

Belongs to the ribonuclease M5 family. Mg(2+) is required as a cofactor.

It localises to the cytoplasm. It catalyses the reaction Endonucleolytic cleavage of RNA, removing 21 and 42 nucleotides, respectively, from the 5'- and 3'-termini of a 5S-rRNA precursor.. Its function is as follows. Required for correct processing of both the 5' and 3' ends of 5S rRNA precursor. Cleaves both sides of a double-stranded region yielding mature 5S rRNA in one step. This is Ribonuclease M5 from Bacillus cereus (strain ATCC 14579 / DSM 31 / CCUG 7414 / JCM 2152 / NBRC 15305 / NCIMB 9373 / NCTC 2599 / NRRL B-3711).